A 213-amino-acid polypeptide reads, in one-letter code: Small ribosomal subunit protein uS3 (213 aa).

The KH type-2 domain occupies 38–106; sequence IRKYVKEKIF…EFALEVSEIR (69 aa).

Belongs to the universal ribosomal protein uS3 family. In terms of assembly, part of the 30S ribosomal subunit. Forms a tight complex with proteins S10 and S14.

Binds the lower part of the 30S subunit head. Binds mRNA in the 70S ribosome, positioning it for translation. This is Small ribosomal subunit protein uS3 from Maridesulfovibrio salexigens (strain ATCC 14822 / DSM 2638 / NCIMB 8403 / VKM B-1763) (Desulfovibrio salexigens).